A 695-amino-acid polypeptide reads, in one-letter code: uncharacterized protein (695 aa).

This is an uncharacterized protein from Xanthomonas campestris pv. campestris (strain ATCC 33913 / DSM 3586 / NCPPB 528 / LMG 568 / P 25).